A 332-amino-acid polypeptide reads, in one-letter code: MTQESLLLLDRIDSDDSYASLRNDQEFWEPLARRALEELGLPVPPVLRVPGESTNPVLVGEPDPVIKLFGEHWCGPESLASESEAYAVLADAPVPVPRLLGRGELRPGTGAWPWPYLVMSRMTGTTWRSAMDGTTDRNALLALARELGRVLGRLHRVPLTGNTVLTPHSEVFPELLRERRAATVEDHRGWGYLSPRLLDRLEDWLPDVDTLLAGREPRFVHGDLHGTNIFVDLAATEVTGIVDFTDVYAGDSRYSLVQLHLNAFRGDREILAALLDGAQWKRTEDFARELLAFTFLHDFEVFEETPLDLSGFTDPEELAQFLWGPPDTAPGA.

The active-site Proton acceptor is the Asp-223.

This sequence belongs to the aminoglycoside phosphotransferase family.

It carries out the reaction hygromycin B + ATP = 7''-O-phosphohygromycin B + ADP + H(+). The aminoglycoside phosphotransferases achieve inactivation of their antibiotic substrates by phosphorylation. The polypeptide is Hygromycin-B 7''-O-kinase (hyg) (Streptomyces hygroscopicus).